Consider the following 316-residue polypeptide: L-lactate dehydrogenase (316 aa).

Residues valine 15, aspartate 37, lysine 42, tyrosine 68, and 82–83 contribute to the NAD(+) site; that span reads GL. Substrate-binding positions include glutamine 85, arginine 91, and 123 to 126; that span reads NPVD. NAD(+) contacts are provided by residues 121–123 and threonine 146; that span reads ASN. 151 to 154 is a binding site for substrate; sequence DTSR. The beta-D-fructose 1,6-bisphosphate site is built by arginine 156 and histidine 171. The active-site Proton acceptor is the histidine 178. A Phosphotyrosine modification is found at tyrosine 222. Position 231 (threonine 231) interacts with substrate.

The protein belongs to the LDH/MDH superfamily. LDH family. In terms of assembly, homotetramer.

It is found in the cytoplasm. It carries out the reaction (S)-lactate + NAD(+) = pyruvate + NADH + H(+). It participates in fermentation; pyruvate fermentation to lactate; (S)-lactate from pyruvate: step 1/1. Its activity is regulated as follows. Allosterically activated by fructose 1,6-bisphosphate (FBP). Its function is as follows. Catalyzes the conversion of lactate to pyruvate. This Borreliella afzelii (strain PKo) (Borrelia afzelii) protein is L-lactate dehydrogenase.